Reading from the N-terminus, the 369-residue chain is Glutamate 5-kinase (369 aa).

Position 9 (lysine 9) interacts with ATP. The substrate site is built by serine 49, aspartate 136, and asparagine 148. ATP contacts are provided by residues 168–169 (TD) and 210–216 (TGGMLTK). The PUA domain occupies 275–355 (QGEIYVDQGA…KGVVIHRDDW (81 aa)).

This sequence belongs to the glutamate 5-kinase family.

The protein localises to the cytoplasm. It carries out the reaction L-glutamate + ATP = L-glutamyl 5-phosphate + ADP. It participates in amino-acid biosynthesis; L-proline biosynthesis; L-glutamate 5-semialdehyde from L-glutamate: step 1/2. Catalyzes the transfer of a phosphate group to glutamate to form L-glutamate 5-phosphate. The polypeptide is Glutamate 5-kinase (Streptococcus sanguinis (strain SK36)).